Here is a 624-residue protein sequence, read N- to C-terminus: uncharacterized protein (624 aa).

The interval 108–138 (PTAWSGMESDSTASERSLPQRTDTTSVSSQY) is disordered. Ser-112 bears the Phosphoserine mark. A compositionally biased stretch (polar residues) spans 115–138 (ESDSTASERSLPQRTDTTSVSSQY). Ser-205 is subject to Phosphoserine. Disordered stretches follow at residues 217–236 (LMES…PGTR) and 305–329 (KREC…PVSE).

This is an uncharacterized protein from Rattus norvegicus (Rat).